A 399-amino-acid chain; its full sequence is Na(+)/H(+) antiporter NhaA (399 aa).

Helical transmembrane passes span 12 to 32 (LDIA…IAAN), 60 to 80 (LLLW…GLEI), 94 to 114 (LAAL…LIYA), 126 to 146 (GWAI…TLLG), 155 to 175 (IFLT…IAFF), 178 to 198 (ASLS…LIGL), 206 to 226 (LWPY…SGVH), 263 to 283 (PWVT…VSLA), 284 to 304 (GLPP…GLFL), 336 to 356 (GVAL…TLAF), and 372 to 392 (LGVL…LRLS).

Belongs to the NhaA Na(+)/H(+) (TC 2.A.33) antiporter family.

The protein localises to the cell inner membrane. The enzyme catalyses Na(+)(in) + 2 H(+)(out) = Na(+)(out) + 2 H(+)(in). Functionally, na(+)/H(+) antiporter that extrudes sodium in exchange for external protons. This chain is Na(+)/H(+) antiporter NhaA, found in Rhodospirillum rubrum (strain ATCC 11170 / ATH 1.1.1 / DSM 467 / LMG 4362 / NCIMB 8255 / S1).